The chain runs to 166 residues: Cyclin-dependent kinase 4 inhibitor D (166 aa).

M1 carries the post-translational modification N-acetylmethionine. ANK repeat units follow at residues 41–69 (FGKT…SPNV), 73–102 (SGTS…DVNA), 106–135 (TGSL…LHHR), and 138–165 (SGLT…MMIP).

It belongs to the CDKN2 cyclin-dependent kinase inhibitor family. As to quaternary structure, interacts with CDK6.

It is found in the nucleus. Its subcellular location is the cytoplasm. In terms of biological role, interacts strongly with CDK4 and CDK6 and inhibits them. The sequence is that of Cyclin-dependent kinase 4 inhibitor D (Cdkn2d) from Mus musculus (Mouse).